The sequence spans 193 residues: E3 ubiquitin-protein ligase RMA2 (193 aa).

The segment at 21 to 75 (CNICLDQVRDPVVTLCGHLFCWPCIHKWTYASNNSRQRVDQYDHKREPPKCPVCK) adopts an RING-type zinc-finger fold. The helical; Anchor for type IV membrane protein transmembrane segment at 175–192 (LSRVYLFLLCFMFMCLFL) threads the bilayer.

Interacts with ERABP1. In terms of tissue distribution, barely detected in roots and limited to the root tips. Expressed in leaf hydathodes and in siliques.

The protein resides in the endoplasmic reticulum membrane. The catalysed reaction is S-ubiquitinyl-[E2 ubiquitin-conjugating enzyme]-L-cysteine + [acceptor protein]-L-lysine = [E2 ubiquitin-conjugating enzyme]-L-cysteine + N(6)-ubiquitinyl-[acceptor protein]-L-lysine.. Its pathway is protein modification; protein ubiquitination. In terms of biological role, E3 ubiquitin-protein ligase that promotes the ubiquitination and proteasomal degradation of the auxin-binding protein ERABP1. The protein is E3 ubiquitin-protein ligase RMA2 (RMA2) of Arabidopsis thaliana (Mouse-ear cress).